The primary structure comprises 315 residues: Tyrosine recombinase XerC (315 aa).

Residues 13–104 enclose the Core-binding (CB) domain; sequence ADLAAAREEW…GVRSLLRHLE (92 aa). A Tyr recombinase domain is found at 125–309; sequence SLPKPLTADD…DTQRLLEVYD (185 aa). Residues Arg-168, Lys-193, His-261, Arg-264, and His-287 contribute to the active site. Catalysis depends on Tyr-296, which acts as the O-(3'-phospho-DNA)-tyrosine intermediate.

The protein belongs to the 'phage' integrase family. XerC subfamily. As to quaternary structure, forms a cyclic heterotetrameric complex composed of two molecules of XerC and two molecules of XerD.

The protein resides in the cytoplasm. In terms of biological role, site-specific tyrosine recombinase, which acts by catalyzing the cutting and rejoining of the recombining DNA molecules. The XerC-XerD complex is essential to convert dimers of the bacterial chromosome into monomers to permit their segregation at cell division. It also contributes to the segregational stability of plasmids. The protein is Tyrosine recombinase XerC of Brucella melitensis biotype 1 (strain ATCC 23456 / CCUG 17765 / NCTC 10094 / 16M).